Reading from the N-terminus, the 382-residue chain is Galactokinase (382 aa).

34-37 (EHTD) contributes to the substrate binding site. An ATP-binding site is contributed by 124-130 (GAGLSSS). Mg(2+)-binding residues include Ser130 and Glu162. Asp174 functions as the Proton acceptor in the catalytic mechanism. Tyr223 is a binding site for substrate.

The protein belongs to the GHMP kinase family. GalK subfamily.

The protein resides in the cytoplasm. It catalyses the reaction alpha-D-galactose + ATP = alpha-D-galactose 1-phosphate + ADP + H(+). It functions in the pathway carbohydrate metabolism; galactose metabolism. Its function is as follows. Catalyzes the transfer of the gamma-phosphate of ATP to D-galactose to form alpha-D-galactose-1-phosphate (Gal-1-P). This Aeromonas hydrophila subsp. hydrophila (strain ATCC 7966 / DSM 30187 / BCRC 13018 / CCUG 14551 / JCM 1027 / KCTC 2358 / NCIMB 9240 / NCTC 8049) protein is Galactokinase.